The primary structure comprises 150 residues: MQIILLDKVANLGSLGDQVNVKPGYARNYLVPQGKAVPATKKNIEFFEARRAELEANLANVLATAEARAEKINALGSVTIASKAGDEGKLFGSVGTRDIADAVTAAGVEVSKSEVRLPNGVLRTIGEHEVNFQVHSDVFAKLNVNIVAEA.

The protein belongs to the bacterial ribosomal protein bL9 family.

Functionally, binds to the 23S rRNA. The chain is Large ribosomal subunit protein bL9 from Photorhabdus laumondii subsp. laumondii (strain DSM 15139 / CIP 105565 / TT01) (Photorhabdus luminescens subsp. laumondii).